The following is a 146-amino-acid chain: Ribonuclease H (146 aa).

The RNase H type-1 domain maps to Met-1–Arg-141. 4 residues coordinate Mg(2+): Asp-9, Glu-47, Asp-69, and Asp-133.

This sequence belongs to the RNase H family. As to quaternary structure, monomer. The cofactor is Mg(2+).

It localises to the cytoplasm. The enzyme catalyses Endonucleolytic cleavage to 5'-phosphomonoester.. Endonuclease that specifically degrades the RNA of RNA-DNA hybrids. The polypeptide is Ribonuclease H (Solibacter usitatus (strain Ellin6076)).